Here is a 329-residue protein sequence, read N- to C-terminus: Porphobilinogen deaminase (329 aa).

Cysteine 250 is subject to S-(dipyrrolylmethanemethyl)cysteine.

It belongs to the HMBS family. In terms of assembly, monomer. Requires dipyrromethane as cofactor.

It catalyses the reaction 4 porphobilinogen + H2O = hydroxymethylbilane + 4 NH4(+). It functions in the pathway porphyrin-containing compound metabolism; protoporphyrin-IX biosynthesis; coproporphyrinogen-III from 5-aminolevulinate: step 2/4. Functionally, tetrapolymerization of the monopyrrole PBG into the hydroxymethylbilane pre-uroporphyrinogen in several discrete steps. The chain is Porphobilinogen deaminase from Burkholderia pseudomallei (strain 668).